A 598-amino-acid chain; its full sequence is MQVPQLLVLFGSQTGTAQDEAERLGREARRRRLGCRVQALDSYSVANLIREPLVIFVCATTGQGDPPDNMKNFWRFIFRKSLPSSSLCQMDFAVLGLGDSSYAKFNFVAKKLHRRLLQLGGSALLPPCLGDDQHELGPDAAIDPWVGDLWEKIMVMYPVPLDIPEIPHGVPLPSKFIFQFLQEVPSIGAEELNIASSAPQTPPSELQPFLAPVITNQRVTGPQHFQDVRLIEFDITDSNISFAAGDVVFILPSNSEAHTQQFCQVLCLDPNQFFTLKPREPGVPDPPGLPQPCTVWNLVSQYLDIASVPRRSFFELLACLSQHALEREKLLELSSARGQEELWEYCSRPRRTILEVLCDFPHTAGAIPPDYLLDLIPRIRPRAFSIASSLLAHPRRLQILVAVVKYQTRLKEPRHGLCSSWLASLNPGQAGPVRVPLWVRPGSLVFPKTPDTPIIMVGAGTGVAPFRAAIQERVAHGQTGNFLFFGCRQRDQDFYWQTEWQKLEQKGWLTLVTAFSREQEQKVYVQHRLRELGPLVWELLDGQGAYFYLAGNAKYLPTDVSEALMSIFQEEGRLSTADASAYLARLQQTLRFQTETWA.

Positions 6–150 (LLVLFGSQTG…AIDPWVGDLW (145 aa)) constitute a Flavodoxin-like domain. FMN is bound by residues 12 to 17 (SQTGTA), 59 to 62 (ATTG), 97 to 106 (LGDSSYAKFN), and Asp-132. The FAD-binding FR-type domain occupies 206–448 (LQPFLAPVIT…VRPGSLVFPK (243 aa)). Residues Arg-350, 382–385 (RAFS), and 416–419 (GLCS) each bind FAD. Residues Thr-461, 516–517 (SR), 522–526 (KVYVQ), and Asp-559 each bind NADP(+). Trp-597 is a binding site for FAD.

This sequence belongs to the NADPH-dependent diflavin oxidoreductase NDOR1 family. It in the N-terminal section; belongs to the flavodoxin family. In the C-terminal section; belongs to the flavoprotein pyridine nucleotide cytochrome reductase family. Interacts with CIAPIN1; as part of the cytosolic iron-sulfur (Fe-S) protein assembly (CIA) machinery. Interacts with DCPS. The cofactor is FAD. It depends on FMN as a cofactor.

It localises to the cytoplasm. It is found in the perinuclear region. It carries out the reaction 2 oxidized [2Fe-2S]-[protein] + NADPH = 2 reduced [2Fe-2S]-[protein] + NADP(+) + H(+). Its function is as follows. NADPH-dependent reductase which is a central component of the cytosolic iron-sulfur (Fe-S) protein assembly (CIA) machinery. Transfers electrons from NADPH via its FAD and FMN prosthetic groups to the [2Fe-2S] cluster of CIAPIN1, another key component of the CIA machinery. In turn, this reduced cluster provides electrons for assembly of cytosolic iron-sulfur cluster proteins. It can also reduce the [2Fe-2S] cluster of CISD1 and activate this protein implicated in Fe/S cluster repair. In vitro can fully activate methionine synthase/MTR in the presence of soluble cytochrome b5/CYB5A. This Mus musculus (Mouse) protein is NADPH-dependent diflavin oxidoreductase 1.